Reading from the N-terminus, the 64-residue chain is Small ribosomal subunit protein eS17 (64 aa).

It belongs to the eukaryotic ribosomal protein eS17 family.

The protein is Small ribosomal subunit protein eS17 of Methanococcoides burtonii (strain DSM 6242 / NBRC 107633 / OCM 468 / ACE-M).